A 636-amino-acid chain; its full sequence is Nuclear receptor subfamily 2 group C member 1 (636 aa).

Residues 149 to 224 constitute a DNA-binding region (nuclear receptor); it reads VELCVVCGDK…LGMKQDSVQC (76 aa). NR C4-type zinc fingers lie at residues 152–172 and 188–207; these read CVVC…CEGC and CRGS…CQYC. The NR LBD domain maps to 382-623; that stretch reads ECVGSNSNLT…SIIPYILRME (242 aa).

This sequence belongs to the nuclear hormone receptor family. NR2 subfamily.

The protein resides in the nucleus. Orphan nuclear receptor. Binds the IR7 element in the promoter of its own gene in an autoregulatory negative feedback mechanism. Primarily repressor of a broad range of genes. Binds to hormone response elements (HREs) consisting of two 5'-AGGTCA-3' half site direct repeat consensus sequences. This is Nuclear receptor subfamily 2 group C member 1 from Xenopus tropicalis (Western clawed frog).